Reading from the N-terminus, the 700-residue chain is Methionine--tRNA ligase (700 aa).

Positions 13–23 (PYANGDIHLGH) match the 'HIGH' region motif. Cys144, Cys147, Cys157, and Cys160 together coordinate Zn(2+). The short motif at 341–345 (KMSKS) is the 'KMSKS' region element. Lys344 provides a ligand contact to ATP. The interval 562-587 (QVGAPTASQDDKAAAKNTSPAAMPSS) is disordered. Residues 577-587 (KNTSPAAMPSS) show a composition bias toward polar residues. A tRNA-binding domain is found at 598-700 (DFAKVEMKVA…DEAVIGDSLA (103 aa)).

This sequence belongs to the class-I aminoacyl-tRNA synthetase family. MetG type 1 subfamily. In terms of assembly, homodimer. Requires Zn(2+) as cofactor.

The protein resides in the cytoplasm. It carries out the reaction tRNA(Met) + L-methionine + ATP = L-methionyl-tRNA(Met) + AMP + diphosphate. Is required not only for elongation of protein synthesis but also for the initiation of all mRNA translation through initiator tRNA(fMet) aminoacylation. The sequence is that of Methionine--tRNA ligase from Psychrobacter cryohalolentis (strain ATCC BAA-1226 / DSM 17306 / VKM B-2378 / K5).